The chain runs to 447 residues: GTPase Era, mitochondrial (447 aa).

The transit peptide at 1–18 (MTLRSCETFLRRSLRFST) directs the protein to the mitochondrion. An Era-type G domain is found at 109–340 (KSLKVAIVGS…RYLFVAAKPC (232 aa)). A G1 region spans residues 117-124 (GSPNAGKS). 117 to 124 (GSPNAGKS) provides a ligand contact to GTP. A G2 region spans residues 143-147 (HTTRS). The interval 164–167 (DTPG) is G3. GTP contacts are provided by residues 164–168 (DTPGL) and 233–236 (NKVD). A G4 region spans residues 233–236 (NKVD). Residues 318-320 (LSS) are G5. The 78-residue stretch at 370–447 (LPKEVPYTMT…RLKISVKLRK (78 aa)) folds into the KH type-2 domain.

Belongs to the TRAFAC class TrmE-Era-EngA-EngB-Septin-like GTPase superfamily. Era GTPase family.

Its subcellular location is the mitochondrion matrix. The protein localises to the mitochondrion inner membrane. In terms of biological role, probable GTPase that plays a role in the mitochondrial ribosomal small subunit assembly. Specifically binds the 12S mitochondrial rRNA (12S mt-rRNA) to a 33 nucleotide section delineating the 3' terminal stem-loop region. May act as a chaperone that protects the 12S mt-rRNA on the 28S mitoribosomal subunit during ribosomal small subunit assembly. This is GTPase Era, mitochondrial (eral1) from Danio rerio (Zebrafish).